We begin with the raw amino-acid sequence, 366 residues long: Ribosomal RNA large subunit methyltransferase M (366 aa).

S-adenosyl-L-methionine-binding positions include Ser-188, 221–224 (CPGG), Asp-240, Asp-260, and Asp-277. Lys-306 acts as the Proton acceptor in catalysis.

Belongs to the class I-like SAM-binding methyltransferase superfamily. RNA methyltransferase RlmE family. RlmM subfamily. As to quaternary structure, monomer.

It is found in the cytoplasm. It carries out the reaction cytidine(2498) in 23S rRNA + S-adenosyl-L-methionine = 2'-O-methylcytidine(2498) in 23S rRNA + S-adenosyl-L-homocysteine + H(+). Functionally, catalyzes the 2'-O-methylation at nucleotide C2498 in 23S rRNA. The chain is Ribosomal RNA large subunit methyltransferase M from Shigella dysenteriae serotype 1 (strain Sd197).